A 78-amino-acid chain; its full sequence is Acyl carrier protein (78 aa).

In terms of domain architecture, Carrier spans 2–77; the sequence is STIEERVKKI…AAIDYVKAHQ (76 aa). An O-(pantetheine 4'-phosphoryl)serine modification is found at S37.

It belongs to the acyl carrier protein (ACP) family. In terms of processing, 4'-phosphopantetheine is transferred from CoA to a specific serine of apo-ACP by AcpS. This modification is essential for activity because fatty acids are bound in thioester linkage to the sulfhydryl of the prosthetic group.

Its subcellular location is the cytoplasm. Its pathway is lipid metabolism; fatty acid biosynthesis. Functionally, carrier of the growing fatty acid chain in fatty acid biosynthesis. This chain is Acyl carrier protein, found in Pseudomonas putida (strain ATCC 47054 / DSM 6125 / CFBP 8728 / NCIMB 11950 / KT2440).